We begin with the raw amino-acid sequence, 240 residues long: tRNA (guanine-N(7)-)-methyltransferase (240 aa).

Residues glutamate 71, glutamate 96, aspartate 123, and aspartate 146 each contribute to the S-adenosyl-L-methionine site. Aspartate 146 is an active-site residue. Substrate-binding positions include lysine 150, aspartate 182, and 219 to 222; that span reads TKFE.

This sequence belongs to the class I-like SAM-binding methyltransferase superfamily. TrmB family.

The enzyme catalyses guanosine(46) in tRNA + S-adenosyl-L-methionine = N(7)-methylguanosine(46) in tRNA + S-adenosyl-L-homocysteine. It participates in tRNA modification; N(7)-methylguanine-tRNA biosynthesis. Its function is as follows. Catalyzes the formation of N(7)-methylguanine at position 46 (m7G46) in tRNA. This Hydrogenovibrio crunogenus (strain DSM 25203 / XCL-2) (Thiomicrospira crunogena) protein is tRNA (guanine-N(7)-)-methyltransferase.